Reading from the N-terminus, the 225-residue chain is Ribosomal RNA small subunit methyltransferase G (225 aa).

S-adenosyl-L-methionine is bound by residues Gly-62, Ala-113–Glu-114, and Lys-130.

It belongs to the methyltransferase superfamily. RNA methyltransferase RsmG family.

It localises to the cytoplasm. Functionally, specifically methylates the N7 position of a guanine in 16S rRNA. This Petrotoga mobilis (strain DSM 10674 / SJ95) protein is Ribosomal RNA small subunit methyltransferase G.